The following is a 206-amino-acid chain: Ribosomal RNA small subunit methyltransferase G (206 aa).

Residues Gly-73, Leu-78, 124 to 125, and Arg-139 contribute to the S-adenosyl-L-methionine site; that span reads VE.

It belongs to the methyltransferase superfamily. RNA methyltransferase RsmG family.

Its subcellular location is the cytoplasm. It catalyses the reaction guanosine(527) in 16S rRNA + S-adenosyl-L-methionine = N(7)-methylguanosine(527) in 16S rRNA + S-adenosyl-L-homocysteine. Functionally, specifically methylates the N7 position of guanine in position 527 of 16S rRNA. The protein is Ribosomal RNA small subunit methyltransferase G of Sodalis glossinidius (strain morsitans).